The primary structure comprises 202 residues: MAAPGRRWSVLLFRALQSLSARRALHDTAPPRDVLLFEHERGRFFAVLGLFCAGQGVFWASLAIASLARPPTPVRPTDAKTPDHGGLDLRSTLWRYGLAVGCGAIGSLVLGAGLLFSLRSVRSVMLRAGGKQVTLTTHAPFGWGAHFTVPLNQVSCMAHRGEVPAMLPLKVKGRRFYFLLDKAGHFPNTKLFDNTVGAYRSL.

Residues 1–43 (MAAPGRRWSVLLFRALQSLSARRALHDTAPPRDVLLFEHERGR) lie on the Mitochondrial matrix side of the membrane. A helical transmembrane segment spans residues 44–64 (FFAVLGLFCAGQGVFWASLAI). Residues 65 to 97 (ASLARPPTPVRPTDAKTPDHGGLDLRSTLWRYG) are Mitochondrial intermembrane-facing. A helical membrane pass occupies residues 98-118 (LAVGCGAIGSLVLGAGLLFSL). Residues 119-202 (RSVRSVMLRA…DNTVGAYRSL (84 aa)) lie on the Mitochondrial matrix side of the membrane.

Belongs to the TMEM223 family. Associates with the mitochondrial ribosome.

It is found in the mitochondrion inner membrane. Its function is as follows. Mitochondrial ribosome-associated protein involved in the first steps of cytochrome c oxidase complex (complex IV) biogenesis. Stimulates the translation of MT-CO1 mRNA and is a constituent of early MT-CO1 assembly intermediates. In Bos taurus (Bovine), this protein is Transmembrane protein 223.